Consider the following 210-residue polypeptide: Proteasome subunit beta (210 aa).

Residues 1 to 9 (MIHDKVFKG) constitute a propeptide, removed in mature form; by autocatalysis. The Nucleophile role is filled by Thr-10.

Belongs to the peptidase T1B family. The 20S proteasome core is composed of 14 alpha and 14 beta subunits that assemble into four stacked heptameric rings, resulting in a barrel-shaped structure. The two inner rings, each composed of seven catalytic beta subunits, are sandwiched by two outer rings, each composed of seven alpha subunits. The catalytic chamber with the active sites is on the inside of the barrel. Has a gated structure, the ends of the cylinder being occluded by the N-termini of the alpha-subunits. Is capped at one or both ends by the proteasome regulatory ATPase, PAN.

The protein localises to the cytoplasm. It catalyses the reaction Cleavage of peptide bonds with very broad specificity.. With respect to regulation, the formation of the proteasomal ATPase PAN-20S proteasome complex, via the docking of the C-termini of PAN into the intersubunit pockets in the alpha-rings, triggers opening of the gate for substrate entry. Interconversion between the open-gate and close-gate conformations leads to a dynamic regulation of the 20S proteasome proteolysis activity. Its function is as follows. Component of the proteasome core, a large protease complex with broad specificity involved in protein degradation. In Ferroglobus placidus (strain DSM 10642 / AEDII12DO), this protein is Proteasome subunit beta.